The sequence spans 85 residues: ATP synthase subunit c (85 aa).

A run of 2 helical transmembrane segments spans residues 10 to 30 (IAVA…FAIL) and 53 to 73 (FIVA…ALFF).

This sequence belongs to the ATPase C chain family. F-type ATPases have 2 components, F(1) - the catalytic core - and F(0) - the membrane proton channel. F(1) has five subunits: alpha(3), beta(3), gamma(1), delta(1), epsilon(1). F(0) has three main subunits: a(1), b(2) and c(10-14). The alpha and beta chains form an alternating ring which encloses part of the gamma chain. F(1) is attached to F(0) by a central stalk formed by the gamma and epsilon chains, while a peripheral stalk is formed by the delta and b chains.

The protein localises to the cell inner membrane. Its function is as follows. F(1)F(0) ATP synthase produces ATP from ADP in the presence of a proton or sodium gradient. F-type ATPases consist of two structural domains, F(1) containing the extramembraneous catalytic core and F(0) containing the membrane proton channel, linked together by a central stalk and a peripheral stalk. During catalysis, ATP synthesis in the catalytic domain of F(1) is coupled via a rotary mechanism of the central stalk subunits to proton translocation. Functionally, key component of the F(0) channel; it plays a direct role in translocation across the membrane. A homomeric c-ring of between 10-14 subunits forms the central stalk rotor element with the F(1) delta and epsilon subunits. The polypeptide is ATP synthase subunit c (Shewanella halifaxensis (strain HAW-EB4)).